The chain runs to 502 residues: NAD(P)H-quinone oxidoreductase chain 4, chloroplastic (502 aa).

The next 14 helical transmembrane spans lie at 4–24, 37–57, 87–107, 113–130, 134–154, 167–187, 208–228, 242–262, 272–292, 305–325, 330–350, 374–396, 416–436, and 464–484; these read FPWL…IFFF, ICIC…HFQL, VGPI…AWPV, LFHF…GLFS, LLLF…LLSM, FILY…GMGL, ALEI…LPII, HYST…YGLV, AHSI…IYAA, IAYS…SITD, GAIL…FLAG, IFTM…GFAA, ILIT…SLSM, and LFVS…PDFV.

The protein belongs to the complex I subunit 4 family.

The protein localises to the plastid. It is found in the chloroplast thylakoid membrane. The catalysed reaction is a plastoquinone + NADH + (n+1) H(+)(in) = a plastoquinol + NAD(+) + n H(+)(out). It carries out the reaction a plastoquinone + NADPH + (n+1) H(+)(in) = a plastoquinol + NADP(+) + n H(+)(out). This Ranunculus macranthus (Large buttercup) protein is NAD(P)H-quinone oxidoreductase chain 4, chloroplastic.